A 248-amino-acid polypeptide reads, in one-letter code: Large ribosomal subunit protein uL30 (248 aa).

The interval 22–42 (KSQEKARAERQAEIEKKKAAN) is disordered. Positions 24-42 (QEKARAERQAEIEKKKAAN) are enriched in basic and acidic residues.

This sequence belongs to the universal ribosomal protein uL30 family. As to quaternary structure, component of the large ribosomal subunit (LSU). Mature N.crassa ribosomes consist of a small (40S) and a large (60S) subunit. The 40S small subunit contains 1 molecule of ribosomal RNA (18S rRNA) and at least 32 different proteins. The large 60S subunit contains 3 rRNA molecules (26S, 5.8S and 5S rRNA) and at least 42 different proteins.

The protein localises to the cytoplasm. Component of the ribosome, a large ribonucleoprotein complex responsible for the synthesis of proteins in the cell. The small ribosomal subunit (SSU) binds messenger RNAs (mRNAs) and translates the encoded message by selecting cognate aminoacyl-transfer RNA (tRNA) molecules. The large subunit (LSU) contains the ribosomal catalytic site termed the peptidyl transferase center (PTC), which catalyzes the formation of peptide bonds, thereby polymerizing the amino acids delivered by tRNAs into a polypeptide chain. The nascent polypeptides leave the ribosome through a tunnel in the LSU and interact with protein factors that function in enzymatic processing, targeting, and the membrane insertion of nascent chains at the exit of the ribosomal tunnel. The protein is Large ribosomal subunit protein uL30 (rpl-7) of Neurospora crassa (strain ATCC 24698 / 74-OR23-1A / CBS 708.71 / DSM 1257 / FGSC 987).